The sequence spans 393 residues: MQTFGEELESLRAAGLFRSMRLVEGEQSSRIILDGREVLLLCSNNYLGLADHPLLKEAAIRAVERFGVGSGAARLVSGNMELHFRLEERIAAFKGTEAALVFNSGYAANTGIISAIAGRGDLIFSDRLNHASIVDGALLSRAKVIRYSHNDMVALRRLLEENRSTSGRRIIVTDGVFSMDGDLAELAELAALKEEFGALLMVDDAHGTGVLGEHGRGSAELCGVMDRVDIHMGTLGKALGSFGAYAAASKEIIDYLVNRARSFIFSTSLPPAVLAASIAAFDLVDSQAGADLRKGLAANSTRFKDGLENAGFNTMGSETQIVPAFVGGAAETMKFSRKLLDQGIFVQGIRPPTVPVGSCRLRCTLMATHSQADVDRAVSAIAHVGRKLGVTGC.

Residue arginine 18 participates in substrate binding. 105–106 (GY) provides a ligand contact to pyridoxal 5'-phosphate. Histidine 130 is a binding site for substrate. Pyridoxal 5'-phosphate contacts are provided by serine 178, histidine 206, and threonine 234. Lysine 237 bears the N6-(pyridoxal phosphate)lysine mark. Substrate is bound at residue threonine 353.

The protein belongs to the class-II pyridoxal-phosphate-dependent aminotransferase family. BioF subfamily. Homodimer. Requires pyridoxal 5'-phosphate as cofactor.

It catalyses the reaction 6-carboxyhexanoyl-[ACP] + L-alanine + H(+) = (8S)-8-amino-7-oxononanoate + holo-[ACP] + CO2. It functions in the pathway cofactor biosynthesis; biotin biosynthesis. In terms of biological role, catalyzes the decarboxylative condensation of pimeloyl-[acyl-carrier protein] and L-alanine to produce 8-amino-7-oxononanoate (AON), [acyl-carrier protein], and carbon dioxide. This chain is 8-amino-7-oxononanoate synthase, found in Geotalea daltonii (strain DSM 22248 / JCM 15807 / FRC-32) (Geobacter daltonii).